Reading from the N-terminus, the 44-residue chain is YADAIFTNSYRKVLGQLSARKLLQDIMSRQQGERNQEQGARVRL.

The residue at position 44 (Leu44) is a Leucine amide.

This sequence belongs to the glucagon family.

Its subcellular location is the secreted. GRF is released by the hypothalamus and acts on the adenohypophyse to stimulate the secretion of growth hormone. In Sus scrofa (Pig), this protein is Somatoliberin (GHRH).